A 317-amino-acid chain; its full sequence is Carbonic anhydrase 5B, mitochondrial (317 aa).

The transit peptide at Met-1 to Ser-33 directs the protein to the mitochondrion. An Alpha-carbonic anhydrase domain is found at Tyr-37–Phe-296. Zn(2+)-binding residues include His-130, His-132, and His-155. Residue Thr-235–Thr-236 coordinates substrate.

It belongs to the alpha-carbonic anhydrase family. Zn(2+) serves as cofactor. Expressed in the heart, liver, lung, kidney, testis, and skeletal muscle (at protein level).

The protein localises to the mitochondrion. The enzyme catalyses hydrogencarbonate + H(+) = CO2 + H2O. Mitochondrial carbonic anhydrase that catalyzes the reversible conversion of carbon dioxide to bicarbonate/HCO3. This chain is Carbonic anhydrase 5B, mitochondrial (Ca5b), found in Mus musculus (Mouse).